The sequence spans 133 residues: Vascular endothelial growth factor homolog (133 aa).

The N-terminal stretch at 1–20 (MKLLVGILVAVCLHQYLLNA) is a signal peptide. 3 cysteine pairs are disulfide-bonded: cysteine 36–cysteine 78, cysteine 67–cysteine 112, and cysteine 71–cysteine 114. Asparagine 85 carries N-linked (GlcNAc...) asparagine; by host glycosylation.

This sequence belongs to the PDGF/VEGF growth factor family. Homodimer; disulfide-linked.

The protein resides in the secreted. Functionally, induces endothelial proliferation. The polypeptide is Vascular endothelial growth factor homolog (Orf virus (strain NZ2) (OV NZ-2)).